Here is a 1101-residue protein sequence, read N- to C-terminus: Rho GTPase-activating protein 30 (1101 aa).

In terms of domain architecture, Rho-GAP spans 20 to 215 (CDLREHLQHS…FILTHVDQLF (196 aa)). Disordered stretches follow at residues 305–397 (RKLP…VRAL) and 450–499 (LQPR…LEDS). Basic and acidic residues predominate over residues 309 to 319 (LRVEDREEKSS). Residues 348 to 367 (SSSSQPSSLMPESLESNSME) show a composition bias toward low complexity. Residues 451 to 465 (QPRPSPALGPGPPGS) show a composition bias toward pro residues. Residue Ser578 is modified to Phosphoserine. The segment at 622–848 (LGPKPINWEG…EQKSIDVETE (227 aa)) is disordered. Basic and acidic residues-rich tracts occupy residues 659–677 (TRQE…REEA), 686–762 (EAGK…KGDD), 786–821 (EVVH…HSED), and 829–844 (DDRK…KSID). Ser875 carries the phosphoserine modification. Disordered regions lie at residues 878–901 (EINE…GMEA) and 968–987 (CPRP…GSRA). Ser996 is modified (phosphoserine). The segment at 1044–1076 (SRPLSCLERPPEGTEGSEPRSRLSLPPRELHPV) is disordered. The segment covering 1052-1064 (RPPEGTEGSEPRS) has biased composition (basic and acidic residues).

As to quaternary structure, interacts with RHOU in a GTP-independent manner.

Its subcellular location is the cytoplasmic vesicle. Functionally, GTPase-activating protein (GAP) for RAC1 and RHOA, but not for CDC42. The chain is Rho GTPase-activating protein 30 (Arhgap30) from Mus musculus (Mouse).